The sequence spans 768 residues: DNA replication licensing factor MCM3 homolog 3 (768 aa).

An MCM domain is found at threonine 290–alanine 497. Residue glycine 340–serine 347 participates in ATP binding. The Arginine finger motif lies at serine 472–aspartate 475. Residues glutamate 661–alanine 670 show a composition bias toward basic and acidic residues. Residues glutamate 661–valine 690 are disordered. Over residues alanine 672–serine 682 the composition is skewed to gly residues.

Belongs to the MCM family.

It is found in the nucleus. It catalyses the reaction ATP + H2O = ADP + phosphate + H(+). In terms of biological role, acts as a factor that allows the DNA to undergo a single round of replication per cell cycle. Required for DNA replication and cell proliferation. May act as a component of the MCM complex which is the putative replicative helicase of the replication licensing system in eukaryotic cells. The sequence is that of DNA replication licensing factor MCM3 homolog 3 (ROA3) from Zea mays (Maize).